Here is a 301-residue protein sequence, read N- to C-terminus: Peptidyl-prolyl cis-trans isomerase E (301 aa).

An RRM domain is found at 5–83; sequence KRVLYVGGLA…GRTIRVNLAK (79 aa). Phosphoserine occurs at positions 91, 97, and 119. The interval 107–140 is disordered; sequence GKTLEENKEEEGSEPPKAETQEGEPAAKKARSNP. The region spanning 143 to 299 is the PPIase cyclophilin-type domain; sequence YMDIKIGNKP…QKVIIADCGE (157 aa).

Belongs to the cyclophilin-type PPIase family. PPIase E subfamily. In terms of assembly, identified in the spliceosome C complex. Component of the XAB2 complex, a multimeric protein complex composed of XAB2, PRPF19, AQR, ZNF830, ISY1, and PPIE. Identified in a pentameric intron-binding (IB) complex composed of AQR, XAB2, ISY1, ZNF830 and PPIE that is incorporated into the spliceosome as a preassembled complex. The IB complex does not contain PRPF19. Interacts (via RNA-binding domain) with KMT2A (via the third PHD-type zinc-finger).

The protein resides in the nucleus. It carries out the reaction [protein]-peptidylproline (omega=180) = [protein]-peptidylproline (omega=0). Its function is as follows. Involved in pre-mRNA splicing as component of the spliceosome. Combines RNA-binding and PPIase activities. Binds mRNA and has a preference for single-stranded RNA molecules with poly-A and poly-U stretches, suggesting it binds to the poly(A)-region in the 3'-UTR of mRNA molecules. Catalyzes the cis-trans isomerization of proline imidic peptide bonds in proteins. Inhibits KMT2A activity; this requires proline isomerase activity. The chain is Peptidyl-prolyl cis-trans isomerase E (PPIE) from Pongo abelii (Sumatran orangutan).